The sequence spans 115 residues: MKFVLLFGVLVVTLFSYSSAEMLDDFDQADEDELLSLIEKEEARAKECTPRFYDCSHDRHSCCRSELFKDVCTCFYPEGGDNEVCTCQQPKHLKYMEKAAGKAKKFGGKIKKWFG.

The N-terminal stretch at 1 to 20 (MKFVLLFGVLVVTLFSYSSA) is a signal peptide. The propeptide occupies 21-44 (EMLDDFDQADEDELLSLIEKEEAR). Intrachain disulfides connect cysteine 48–cysteine 63, cysteine 55–cysteine 72, cysteine 62–cysteine 87, and cysteine 74–cysteine 85.

The protein belongs to the neurotoxin 19 (CSTX) family. 01 subfamily. As to expression, expressed by the venom gland.

It localises to the secreted. This Lycosa singoriensis (Wolf spider) protein is U3-lycotoxin-Ls1k.